The primary structure comprises 311 residues: uncharacterized protein (311 aa).

The signal sequence occupies residues 1–13 (MLLSLIFPIAVLG). The N-linked (GlcNAc...) asparagine glycan is linked to N115.

Its subcellular location is the secreted. This is an uncharacterized protein from Encephalitozoon cuniculi (strain GB-M1) (Microsporidian parasite).